Here is a 238-residue protein sequence, read N- to C-terminus: Fatty acid metabolism regulator protein (238 aa).

The 69-residue stretch at 6-74 folds into the HTH gntR-type domain; sequence KGPASFAEKY…HGKPTRVNNF (69 aa). The segment at residues 34–53 is a DNA-binding region (H-T-H motif); that stretch reads ERELSELIGVTRTTLREVLQ.

Homodimer.

It is found in the cytoplasm. In terms of biological role, multifunctional regulator of fatty acid metabolism. In Shewanella baltica (strain OS185), this protein is Fatty acid metabolism regulator protein.